The primary structure comprises 302 residues: Sodium/potassium-transporting ATPase subunit beta-233 (302 aa).

The Cytoplasmic segment spans residues 1–30; the sequence is MSGNKDSDGGWKTFIWNSEKKELLGRTGCS. Residues 31–51 traverse the membrane as a helical; Signal-anchor for type II membrane protein segment; that stretch reads WFKILLFYVIFYGCLAAVFVG. Topologically, residues 52–302 are extracellular; the sequence is TIQALLLTLS…FDIKITVNDS (251 aa). 2 disulfide bridges follow: C125/C148 and C158/C174. Residues N193 and N263 are each glycosylated (N-linked (GlcNAc...) asparagine). A disulfide bridge links C213 with C274.

Belongs to the X(+)/potassium ATPases subunit beta family. In terms of assembly, the sodium/potassium-transporting ATPase is composed of a catalytic alpha subunit, an auxiliary non-catalytic beta subunit and an additional regulatory subunit. In terms of processing, glycosylated. In terms of tissue distribution, expressed mainly in epithelial tissues.

It localises to the cell membrane. In terms of biological role, this is the non-catalytic component of the active enzyme, which catalyzes the hydrolysis of ATP coupled with the exchange of Na(+) and K(+) ions across the plasma membrane. The beta subunit regulates, through assembly of alpha/beta heterodimers, the number of sodium pumps transported to the plasma membrane. The polypeptide is Sodium/potassium-transporting ATPase subunit beta-233 (Anguilla anguilla (European freshwater eel)).